Reading from the N-terminus, the 423-residue chain is Pentamidine resistance factor, mitochondrial (423 aa).

The helical transmembrane segment at 199–219 (PVFFTLVFIFEEVSVLIFTFF) threads the bilayer.

Interacts with COX18. This interaction may be essential for its insertion into mitochondrial inner membrane.

It is found in the mitochondrion inner membrane. In terms of biological role, probably involved in mitochondrial export. Confers resistance to the anti-pneumocystis carinii drug pentamidine. May act by the removal of pentamidine, or its damage targets, from the matrix by an active-transport mechanism. In Saccharomyces cerevisiae (strain ATCC 204508 / S288c) (Baker's yeast), this protein is Pentamidine resistance factor, mitochondrial (PNT1).